Consider the following 278-residue polypeptide: Cytidine kinase (278 aa).

203-208 (TRGEKG) contributes to the ATP binding site. Asp-237 acts as the Proton acceptor in catalysis.

Belongs to the carbohydrate kinase PfkB family. The cofactor is Mg(2+).

It carries out the reaction cytidine + ATP = CMP + ADP + H(+). Its function is as follows. Involved in nucleoside degradation. Phosphorylates cytidine to CMP. Can also act on deoxycytidine and uridine, but is most active with cytidine. ATP is the most preferred phosphate donor, but it can also use GTP, CTP or UTP. The sequence is that of Cytidine kinase from Thermococcus kodakarensis (strain ATCC BAA-918 / JCM 12380 / KOD1) (Pyrococcus kodakaraensis (strain KOD1)).